The sequence spans 212 residues: Pyridoxine/pyridoxamine 5'-phosphate oxidase (212 aa).

Substrate contacts are provided by residues 7–10 (RREY) and lysine 66. FMN is bound by residues 61–66 (RIVLLK), 76–77 (YT), lysine 83, and glutamine 105. Substrate is bound by residues tyrosine 123, arginine 127, and serine 131. FMN is bound by residues 140–141 (QS) and tryptophan 185. 191–193 (RLH) is a substrate binding site. Arginine 195 contributes to the FMN binding site.

Belongs to the pyridoxamine 5'-phosphate oxidase family. Homodimer. The cofactor is FMN.

The enzyme catalyses pyridoxamine 5'-phosphate + O2 + H2O = pyridoxal 5'-phosphate + H2O2 + NH4(+). It catalyses the reaction pyridoxine 5'-phosphate + O2 = pyridoxal 5'-phosphate + H2O2. It participates in cofactor metabolism; pyridoxal 5'-phosphate salvage; pyridoxal 5'-phosphate from pyridoxamine 5'-phosphate: step 1/1. The protein operates within cofactor metabolism; pyridoxal 5'-phosphate salvage; pyridoxal 5'-phosphate from pyridoxine 5'-phosphate: step 1/1. Its function is as follows. Catalyzes the oxidation of either pyridoxine 5'-phosphate (PNP) or pyridoxamine 5'-phosphate (PMP) into pyridoxal 5'-phosphate (PLP). The polypeptide is Pyridoxine/pyridoxamine 5'-phosphate oxidase (Idiomarina loihiensis (strain ATCC BAA-735 / DSM 15497 / L2-TR)).